Reading from the N-terminus, the 372-residue chain is Putative glutamate--cysteine ligase 2 (372 aa).

This sequence belongs to the glutamate--cysteine ligase type 2 family. YbdK subfamily. As to quaternary structure, homodimer.

The catalysed reaction is L-cysteine + L-glutamate + ATP = gamma-L-glutamyl-L-cysteine + ADP + phosphate + H(+). ATP-dependent carboxylate-amine ligase which exhibits weak glutamate--cysteine ligase activity. This chain is Putative glutamate--cysteine ligase 2 (ybdK), found in Escherichia coli O81 (strain ED1a).